A 150-amino-acid polypeptide reads, in one-letter code: Small ribosomal subunit protein eS19S (150 aa).

The protein belongs to the eukaryotic ribosomal protein eS19 family.

In Ascaris suum (Pig roundworm), this protein is Small ribosomal subunit protein eS19S (RPS19S).